The chain runs to 172 residues: Lipoprotein signal peptidase (172 aa).

The next 2 helical transmembrane spans lie at 70–90 (ERWL…AWIW) and 94–114 (AKGD…NIAD). Catalysis depends on residues aspartate 123 and aspartate 142. Residues 134-154 (PFLVFNVADAAITIGVLILVL) traverse the membrane as a helical segment.

This sequence belongs to the peptidase A8 family.

It is found in the cell inner membrane. It carries out the reaction Release of signal peptides from bacterial membrane prolipoproteins. Hydrolyzes -Xaa-Yaa-Zaa-|-(S,diacylglyceryl)Cys-, in which Xaa is hydrophobic (preferably Leu), and Yaa (Ala or Ser) and Zaa (Gly or Ala) have small, neutral side chains.. It participates in protein modification; lipoprotein biosynthesis (signal peptide cleavage). Functionally, this protein specifically catalyzes the removal of signal peptides from prolipoproteins. This is Lipoprotein signal peptidase from Rhizorhabdus wittichii (strain DSM 6014 / CCUG 31198 / JCM 15750 / NBRC 105917 / EY 4224 / RW1) (Sphingomonas wittichii).